Here is a 625-residue protein sequence, read N- to C-terminus: Transferrin-binding protein B (625 aa).

The N-terminal stretch at 1-17 (MKSVPLISGGLSLFLSA) is a signal peptide. Cys-18 is lipidated: N-palmitoyl cysteine. A lipid anchor (S-diacylglycerol cysteine) is attached at Cys-18. Disordered regions lie at residues 25–52 (FDVD…KKSN), 99–125 (KKEN…QNHH), 275–298 (VKPT…GGFY), and 584–610 (FTYN…KARA). Positions 276 to 292 (KPTEKDSEEHPFTREGT) are enriched in basic and acidic residues. Polar residues predominate over residues 587–605 (NGKNPTDKNSPTASSPSNS).

It belongs to the TbpB family.

The protein localises to the cell outer membrane. It is found in the cell surface. Haemophilus acquires iron by extracting it from serum transferrin (TF) in its human host. Acts as a transferrin receptor and is required for transferrin utilization. The sequence is that of Transferrin-binding protein B (tbpB) from Haemophilus influenzae (strain ATCC 51907 / DSM 11121 / KW20 / Rd).